Consider the following 107-residue polypeptide: Ferredoxin-6 (107 aa).

The 2Fe-2S ferredoxin-type domain maps to 2-106 (AKIIFIEHNG…GLVVHLPEKQ (105 aa)). [2Fe-2S] cluster is bound by residues Cys-40, Cys-46, Cys-49, and Cys-87.

It belongs to the adrenodoxin/putidaredoxin family. It depends on [2Fe-2S] cluster as a cofactor.

Functionally, ferredoxins are small electron carrier proteins that participate in various redox reactions. FdVI is an essential protein required for growth of R.capsulatus. May be involved in Fe-S cluster assembly. This chain is Ferredoxin-6, found in Rhodobacter capsulatus (Rhodopseudomonas capsulata).